We begin with the raw amino-acid sequence, 484 residues long: 60S ribosome subunit biogenesis protein NOP8 (484 aa).

The region spanning 7-83 (KRIFVGNIFH…NILKVDEAKP (77 aa)) is the RRM domain. Phosphoserine occurs at positions 234, 239, and 268. The disordered stretch occupies residues 260–330 (DKPMTLNDSD…EGDGQEDNEF (71 aa)). Residues 320–329 (DEGDGQEDNE) are compositionally biased toward acidic residues. S370 bears the Phosphoserine mark.

Interacts with NIP7 and RRP43. Together with DBP6, URB1, URB2 and RSA3, forms an RNA-independent complex, which is required during early maturation of nascent 60S ribosomal subunits.

It is found in the nucleus. It localises to the nucleolus. Functionally, required for 60S ribosomal subunit synthesis. May be involved in assembly reactions occurring within late pre-ribosomal particles. The chain is 60S ribosome subunit biogenesis protein NOP8 (NOP8) from Saccharomyces cerevisiae (strain ATCC 204508 / S288c) (Baker's yeast).